The chain runs to 147 residues: Hemoglobin subunit epsilon (147 aa).

In terms of domain architecture, Globin spans 3-147 (HFTAEEKSTI…VATALAHKYH (145 aa)). A phosphoserine mark is found at serine 14 and serine 51. Histidine 64 and histidine 93 together coordinate heme b.

This sequence belongs to the globin family. As to quaternary structure, heterotetramer of two alpha chains and two epsilon chains in early embryonic hemoglobin Gower-2; two zeta chains and two epsilon chains in early embryonic hemoglobin Gower-1. In terms of tissue distribution, red blood cells.

Functionally, the epsilon chain is a beta-type chain of early mammalian embryonic hemoglobin. In Cheirogaleus medius (Fat-tailed dwarf lemur), this protein is Hemoglobin subunit epsilon (HBE1).